A 214-amino-acid chain; its full sequence is Probable chorismate pyruvate-lyase (214 aa).

Residues arginine 74, leucine 112, and glutamate 173 each coordinate substrate. A disordered region spans residues 183-214 (AAPENTGAGGTRLPRRIDTHHTPSKQEERPES). Positions 197-214 (RRIDTHHTPSKQEERPES) are enriched in basic and acidic residues.

Belongs to the UbiC family.

It is found in the cytoplasm. The catalysed reaction is chorismate = 4-hydroxybenzoate + pyruvate. Its pathway is cofactor biosynthesis; ubiquinone biosynthesis. Its function is as follows. Removes the pyruvyl group from chorismate, with concomitant aromatization of the ring, to provide 4-hydroxybenzoate (4HB) for the ubiquinone pathway. The protein is Probable chorismate pyruvate-lyase of Cupriavidus metallidurans (strain ATCC 43123 / DSM 2839 / NBRC 102507 / CH34) (Ralstonia metallidurans).